We begin with the raw amino-acid sequence, 38 residues long: Large ribosomal subunit protein bL36 (38 aa).

Belongs to the bacterial ribosomal protein bL36 family.

The protein is Large ribosomal subunit protein bL36 of Bacteroides fragilis (strain ATCC 25285 / DSM 2151 / CCUG 4856 / JCM 11019 / LMG 10263 / NCTC 9343 / Onslow / VPI 2553 / EN-2).